Consider the following 73-residue polypeptide: Protein SlyX homolog (73 aa).

Belongs to the SlyX family.

This Actinobacillus pleuropneumoniae serotype 5b (strain L20) protein is Protein SlyX homolog.